The primary structure comprises 1131 residues: DNA polymerase II large subunit (1131 aa).

Belongs to the archaeal DNA polymerase II family. As to quaternary structure, heterodimer of a large subunit and a small subunit.

The enzyme catalyses DNA(n) + a 2'-deoxyribonucleoside 5'-triphosphate = DNA(n+1) + diphosphate. The catalysed reaction is Exonucleolytic cleavage in the 3'- to 5'-direction to yield nucleoside 5'-phosphates.. Its function is as follows. Possesses two activities: a DNA synthesis (polymerase) and an exonucleolytic activity that degrades single-stranded DNA in the 3'- to 5'-direction. Has a template-primer preference which is characteristic of a replicative DNA polymerase. The sequence is that of DNA polymerase II large subunit from Methanococcus vannielii (strain ATCC 35089 / DSM 1224 / JCM 13029 / OCM 148 / SB).